We begin with the raw amino-acid sequence, 155 residues long: Small ribosomal subunit protein uS7cz/uS7cy (155 aa).

This sequence belongs to the universal ribosomal protein uS7 family. In terms of assembly, part of the 30S ribosomal subunit.

It is found in the plastid. It localises to the chloroplast. One of the primary rRNA binding proteins, it binds directly to 16S rRNA where it nucleates assembly of the head domain of the 30S subunit. This Lotus japonicus (Lotus corniculatus var. japonicus) protein is Small ribosomal subunit protein uS7cz/uS7cy (rps7-A).